Consider the following 706-residue polypeptide: MESGTVLLESKSSPLNLLHEMHELRLLGHLCDVTVSIENQGVHEDFMAHKAVLAATSKFFKEVFLNEKSADGTRTNVYLNEVQAVDFASFLEFVYTAKVRVEEDRVQQMLEVAEKLKCLDLSETCLQLKKQMLESVLLELQNFSESQEVEASSGPQVSVTPSSKASVPGEDAHSNGLVDSSDYPIERLGNGLSPETPSKKCKEKLDKKKDVAKPPFPKIRRASGRLAGKKVFVEIPKKKYTRRLREQQKSAEEAAENDKCPQDQSPDNERMETEPAAKSEACPASVELEESLQKVEGEKEEEEGKDGEEKKKSNFQCTVCDKAFLYEKSFLKHIKYHHGVATEVVYRCDTCGQTFANRCNLKSHQRHVHSSERHFPCEMCAKKFKRKKDVKRHVLQVHEGGGERHRCGQCGKGLSSKTALRLHERTHTGDKPYGCTKCDAKFSQPSALKTHLRVHTGERPFVCDECGARFTQNHMLIYHKRCHTGERPFMCETCGKSFASKEYLKHHNRIHTGSKPFKCEVCLRTFAQRNSLYQHIKVHTGERPYCCDQCGKQFTQVNALQRHHRIHTGEKPYMCNACGRTFTDKSTLRRHTSIHDKNTPWKSFLVIVDGSPKNDEGHKTEQPDDEYASPKLSDRLLSFGENSHFNNLLEVQGNVPAVQENSSTGAACKAVVSQDALLTTSISALGELTPQAVSMPAHLPSLTNME.

In terms of domain architecture, BTB spans 31–103 (CDVTVSIENQ…VYTAKVRVEE (73 aa)). The span at 149 to 165 (VEASSGPQVSVTPSSKA) shows a compositional bias: polar residues. 2 disordered regions span residues 149 to 220 (VEAS…PKIR) and 242 to 308 (RRLR…KDGE). 2 stretches are compositionally biased toward basic and acidic residues: residues 197-212 (PSKK…KDVA) and 242-277 (RRLR…EPAA). 10 C2H2-type zinc fingers span residues 315-337 (FQCT…IKYH), 346-369 (YRCD…RHVH), 375-398 (FPCE…LQVH), 405-427 (HRCG…ERTH), 433-455 (YGCT…LRVH), 461-483 (FVCD…KRCH), 489-511 (FMCE…NRIH), 517-539 (FKCE…IKVH), 545-567 (YCCD…HRIH), and 573-595 (YMCN…TSIH). S611 carries the phosphoserine modification.

It belongs to the krueppel C2H2-type zinc-finger protein family. Interacts with NCL. In terms of tissue distribution, expressed in several tissues, with highest levels in liver. Also expressed in embryos from 7 to 17 dpc.

The protein resides in the nucleus. It localises to the cytoplasm. Its subcellular location is the nucleolus. Its function is as follows. Transcriptional repressor that binds the GZF1 responsive element (GRE) (consensus: 5'-TGCGCN[TG][CA]TATA-3'). May be regulating VSX2/HOX10 expression. The sequence is that of GDNF-inducible zinc finger protein 1 from Mus musculus (Mouse).